The sequence spans 329 residues: DNA-directed RNA polymerase subunit alpha (329 aa).

An alpha N-terminal domain (alpha-NTD) region spans residues 1-235; it reads MQGSVIEFLK…EQLDAFVDLR (235 aa). The segment at 249 to 329 is alpha C-terminal domain (alpha-CTD); the sequence is FDPILLRPVD…NWPPASIAED (81 aa).

It belongs to the RNA polymerase alpha chain family. As to quaternary structure, homodimer. The RNAP catalytic core consists of 2 alpha, 1 beta, 1 beta' and 1 omega subunit. When a sigma factor is associated with the core the holoenzyme is formed, which can initiate transcription.

The catalysed reaction is RNA(n) + a ribonucleoside 5'-triphosphate = RNA(n+1) + diphosphate. In terms of biological role, DNA-dependent RNA polymerase catalyzes the transcription of DNA into RNA using the four ribonucleoside triphosphates as substrates. The chain is DNA-directed RNA polymerase subunit alpha from Haemophilus ducreyi (strain 35000HP / ATCC 700724).